Here is a 299-residue protein sequence, read N- to C-terminus: Triplex capsid protein 1 (299 aa).

Belongs to the herpesviridae TRX1 protein family. In terms of assembly, interacts with TRX2, MCP and capsid vertex component 2/CVC2.

The protein resides in the virion. Its subcellular location is the host nucleus. Structural component of the T=16 icosahedral capsid. The capsid is composed of pentamers and hexamers of major capsid protein/MCP, which are linked together by heterotrimers called triplexes. These triplexes are formed by a single molecule of triplex protein 1/TRX1 and two copies of triplex protein 2/TRX2. Additionally, TRX1 is required for efficient transport of TRX2 to the nucleus, which is the site of capsid assembly. The sequence is that of Triplex capsid protein 1 from Homo sapiens (Human).